A 346-amino-acid polypeptide reads, in one-letter code: E3 ubiquitin-protein ligase RNF146-A (346 aa).

The segment at 37–75 (CAICLQTCVHPVSLPCKHVFCYLCVKGASWLGKRCALCR) adopts an RING-type zinc-finger fold. Residues 91 to 167 (PELKAASRGN…EHGRRRKIKR (77 aa)) enclose the WWE domain. Disordered stretches follow at residues 195-240 (SSAD…GTSL) and 256-301 (ERSH…ALVA). The segment covering 202 to 216 (SVPAQSGASVQSSSV) has biased composition (low complexity). Acidic residues predominate over residues 281–295 (SIEETESDASSDSED).

Interacts with poly-ADP-ribosylated AXIN1, AXIN2, BLZF1 and CASC3. Ubiquitinated; autoubiquitinated. Autoubiquitination is enhanced upon poly(ADP-ribose)-binding.

The protein localises to the cytoplasm. Its subcellular location is the cytosol. The catalysed reaction is S-ubiquitinyl-[E2 ubiquitin-conjugating enzyme]-L-cysteine + [acceptor protein]-L-lysine = [E2 ubiquitin-conjugating enzyme]-L-cysteine + N(6)-ubiquitinyl-[acceptor protein]-L-lysine.. It participates in protein modification; protein ubiquitination. Functionally, E3 ubiquitin-protein ligase that specifically binds poly-ADP-ribosylated proteins and mediates their ubiquitination and subsequent degradation. Acts as an activator of the Wnt signaling pathway by mediating the ubiquitination of poly-ADP-ribosylated AXIN1 and AXIN2, 2 key components of the beta-catenin destruction complex. Acts in cooperation with tankyrase proteins (TNKS and TNKS2), which mediate poly-ADP-ribosylation of target proteins AXIN1, AXIN2, BLZF1, CASC3, TNKS and TNKS2. Recognizes and binds tankyrase-dependent poly-ADP-ribosylated proteins via its WWE domain and mediates their ubiquitination. This Bos taurus (Bovine) protein is E3 ubiquitin-protein ligase RNF146-A (RNF146A).